Here is a 437-residue protein sequence, read N- to C-terminus: Serine hydroxymethyltransferase (437 aa).

(6S)-5,6,7,8-tetrahydrofolate is bound by residues leucine 130 and 134–136 (GHL). Residue lysine 239 is modified to N6-(pyridoxal phosphate)lysine.

The protein belongs to the SHMT family. As to quaternary structure, homodimer. It depends on pyridoxal 5'-phosphate as a cofactor.

It is found in the cytoplasm. It catalyses the reaction (6R)-5,10-methylene-5,6,7,8-tetrahydrofolate + glycine + H2O = (6S)-5,6,7,8-tetrahydrofolate + L-serine. It participates in one-carbon metabolism; tetrahydrofolate interconversion. Its pathway is amino-acid biosynthesis; glycine biosynthesis; glycine from L-serine: step 1/1. In terms of biological role, catalyzes the reversible interconversion of serine and glycine with tetrahydrofolate (THF) serving as the one-carbon carrier. This reaction serves as the major source of one-carbon groups required for the biosynthesis of purines, thymidylate, methionine, and other important biomolecules. Also exhibits THF-independent aldolase activity toward beta-hydroxyamino acids, producing glycine and aldehydes, via a retro-aldol mechanism. The sequence is that of Serine hydroxymethyltransferase from Bartonella tribocorum (strain CIP 105476 / IBS 506).